The sequence spans 980 residues: GPI inositol-deacylase (980 aa).

The Cytoplasmic segment spans residues 1–7; that stretch reads MFMFRNC. Residues 8–28 traverse the membrane as a helical segment; it reads AVLLVIGSICCFIYGLFRLHV. The Lumenal portion of the chain corresponds to 29–628; sequence EVEPNACRMT…EYSYSSALSR (600 aa). The active site involves serine 170. Residues asparagine 427, asparagine 517, and asparagine 596 are each glycosylated (N-linked (GlcNAc...) asparagine). Residues 629–649 traverse the membrane as a helical segment; sequence LVLEFYGWLPAHLVCVLLIVL. The Cytoplasmic portion of the chain corresponds to 650–709; it reads RKQVETFYDVGTFRSLRPYVGYLQYTSLYIVTACRLLKKLIISSRVFPEPEPLDYSINVS. Residues 710-730 form a helical membrane-spanning segment; that stretch reads IVIHCAAIALSLLATLGTWLA. Residues 731-774 lie on the Lumenal side of the membrane; it reads LTLYGNAFYRLALRITRLSQATSNVMISIMTHLPITYGILTIAT. A helical membrane pass occupies residues 775 to 795; sequence AMGTCSGVGLLLAFVFYFLML. Residues 796-867 lie on the Cytoplasmic side of the membrane; sequence SNAYKDYLED…CVGLQNFSFH (72 aa). A disordered region spans residues 821-853; sequence AVTEQEDATEEQNEEQNALKQNDEQKQQQQEEE. Residues 824–834 are compositionally biased toward acidic residues; the sequence is EQEDATEEQNE. A helical membrane pass occupies residues 868–888; it reads VTLLLMLFVQLLLNAPSSLAW. Residues 889–895 are Lumenal-facing; the sequence is LRSRRHG. A helical membrane pass occupies residues 896 to 916; it reads INLPDPSLYPSIVVLASLSLL. Over 917-929 the chain is Cytoplasmic; that stretch reads LQLRAPQKCQGYW. The helical transmembrane segment at 930-950 threads the bilayer; the sequence is MLSIAFYILAGVVLLYCQAAI. The Lumenal portion of the chain corresponds to 951 to 954; sequence YRLT. Residues 955-975 traverse the membrane as a helical segment; sequence YVIAGAFALLSAHQSLWILWG. At 976–980 the chain is on the cytoplasmic side; that stretch reads RVSRV.

The protein belongs to the GPI inositol-deacylase family.

It localises to the endoplasmic reticulum membrane. Its function is as follows. Involved in inositol deacylation of GPI-anchored proteins. This is GPI inositol-deacylase from Drosophila melanogaster (Fruit fly).